A 505-amino-acid chain; its full sequence is Histidine ammonia-lyase (505 aa).

The 5-imidazolinone (Ala-Gly) cross-link spans Ala-141–Gly-143. Ser-142 carries the 2,3-didehydroalanine (Ser) modification.

The protein belongs to the PAL/histidase family. In terms of processing, contains an active site 4-methylidene-imidazol-5-one (MIO), which is formed autocatalytically by cyclization and dehydration of residues Ala-Ser-Gly.

The protein localises to the cytoplasm. The enzyme catalyses L-histidine = trans-urocanate + NH4(+). The protein operates within amino-acid degradation; L-histidine degradation into L-glutamate; N-formimidoyl-L-glutamate from L-histidine: step 1/3. In Bacillus anthracis, this protein is Histidine ammonia-lyase.